Here is a 130-residue protein sequence, read N- to C-terminus: Small ribosomal subunit protein uS11c (130 aa).

Belongs to the universal ribosomal protein uS11 family. In terms of assembly, part of the 30S ribosomal subunit.

The protein resides in the plastid. It localises to the chloroplast. The polypeptide is Small ribosomal subunit protein uS11c (Tupiella akineta (Green alga)).